The sequence spans 472 residues: tRNA modification GTPase MnmE (472 aa).

Residues arginine 28, glutamate 91, and lysine 130 each contribute to the (6S)-5-formyl-5,6,7,8-tetrahydrofolate site. The TrmE-type G domain maps to 225–391; it reads GAKVVLAGKT…LSEKAYSVLA (167 aa). Asparagine 235 contributes to the K(+) binding site. Residues 235-240, 254-260, and 279-282 contribute to the GTP site; these read NAGKSS, SDIHGTT, and DTAG. Residue serine 239 participates in Mg(2+) binding. 3 residues coordinate K(+): serine 254, isoleucine 256, and threonine 259. Threonine 260 lines the Mg(2+) pocket. Residue lysine 472 participates in (6S)-5-formyl-5,6,7,8-tetrahydrofolate binding.

This sequence belongs to the TRAFAC class TrmE-Era-EngA-EngB-Septin-like GTPase superfamily. TrmE GTPase family. As to quaternary structure, homodimer. Heterotetramer of two MnmE and two MnmG subunits. It depends on K(+) as a cofactor.

Its subcellular location is the cytoplasm. Functionally, exhibits a very high intrinsic GTPase hydrolysis rate. Involved in the addition of a carboxymethylaminomethyl (cmnm) group at the wobble position (U34) of certain tRNAs, forming tRNA-cmnm(5)s(2)U34. The chain is tRNA modification GTPase MnmE from Treponema denticola (strain ATCC 35405 / DSM 14222 / CIP 103919 / JCM 8153 / KCTC 15104).